The following is a 305-amino-acid chain: Ornithine carbamoyltransferase (305 aa).

Carbamoyl phosphate contacts are provided by residues 52 to 55, glutamine 79, arginine 103, and 130 to 133; these read STRT and HPLQ. L-ornithine contacts are provided by residues asparagine 162, aspartate 224, and 228–229; that span reads SM. Carbamoyl phosphate is bound by residues 264–265 and arginine 292; that span reads CL.

Belongs to the aspartate/ornithine carbamoyltransferase superfamily. OTCase family.

It is found in the cytoplasm. It carries out the reaction carbamoyl phosphate + L-ornithine = L-citrulline + phosphate + H(+). It functions in the pathway amino-acid biosynthesis; L-arginine biosynthesis; L-arginine from L-ornithine and carbamoyl phosphate: step 1/3. Functionally, reversibly catalyzes the transfer of the carbamoyl group from carbamoyl phosphate (CP) to the N(epsilon) atom of ornithine (ORN) to produce L-citrulline. This Pyrobaculum aerophilum (strain ATCC 51768 / DSM 7523 / JCM 9630 / CIP 104966 / NBRC 100827 / IM2) protein is Ornithine carbamoyltransferase.